A 235-amino-acid chain; its full sequence is Type III pantothenate kinase (235 aa).

6–13 (DVGNTSLK) contacts ATP. Substrate is bound by residues tyrosine 79 and 86-89 (GIDR). The active-site Proton acceptor is the aspartate 88. Aspartate 109 provides a ligand contact to K(+). ATP is bound at residue threonine 112. Threonine 164 contributes to the substrate binding site.

It belongs to the type III pantothenate kinase family. In terms of assembly, homodimer. Requires NH4(+) as cofactor. The cofactor is K(+).

It is found in the cytoplasm. It catalyses the reaction (R)-pantothenate + ATP = (R)-4'-phosphopantothenate + ADP + H(+). Its pathway is cofactor biosynthesis; coenzyme A biosynthesis; CoA from (R)-pantothenate: step 1/5. Catalyzes the phosphorylation of pantothenate (Pan), the first step in CoA biosynthesis. The polypeptide is Type III pantothenate kinase (Pseudoalteromonas translucida (strain TAC 125)).